The primary structure comprises 242 residues: EF-hand domain-containing protein D2 (242 aa).

The interval 1 to 53 (MATDELASKLSRRLQMEGEGGGEAPEQPGLNGAAAAAAAAGAPDETAEALGSA) is disordered. An N-acetylalanine modification is found at A2. Position 11 is a phosphoserine (S11). Over residues 32–42 (GAAAAAAAAGA) the composition is skewed to low complexity. S76 and S78 each carry phosphoserine. Y85 is modified (phosphotyrosine). EF-hand domains are found at residues 94–129 (KQIKDMEKMFKEYDAGRDGFIDLMELKLMMEKLGAP) and 130–165 (QTHLGLKNMIKEVDEDFDSKLSFREFLLIFRKAAAG). Ca(2+) is bound by residues D107, D111, E118, D143, D145, D147, K149, and E154. N6-acetyllysine is present on K235.

In terms of assembly, interacts with CASP9; with inactive form.

The protein localises to the membrane raft. May regulate B-cell receptor (BCR)-induced immature and primary B-cell apoptosis. Plays a role as negative regulator of the canonical NF-kappa-B-activating branch. Controls spontaneous apoptosis through the regulation of BCL2L1 abundance. This Bos taurus (Bovine) protein is EF-hand domain-containing protein D2 (EFHD2).